We begin with the raw amino-acid sequence, 237 residues long: tRNA-splicing endonuclease subunit Sen2-1 (237 aa).

Catalysis depends on residues tyrosine 148, histidine 156, and lysine 190.

This sequence belongs to the tRNA-intron endonuclease family. As to quaternary structure, tRNA splicing endonuclease is a heterotetramer composed of SEN2, SEN15, SEN34/LENG5 and SEN54.

It localises to the nucleus. It catalyses the reaction pretRNA = a 3'-half-tRNA molecule with a 5'-OH end + a 5'-half-tRNA molecule with a 2',3'-cyclic phosphate end + an intron with a 2',3'-cyclic phosphate and a 5'-hydroxyl terminus.. Functionally, constitutes one of the two catalytic subunit of the tRNA-splicing endonuclease complex, a complex responsible for identification and cleavage of the splice sites in pre-tRNA. It cleaves pre-tRNA at the 5'- and 3'-splice sites to release the intron. The products are an intron and two tRNA half-molecules bearing 2',3'-cyclic phosphate and 5'-OH termini. There are no conserved sequences at the splice sites, but the intron is invariably located at the same site in the gene, placing the splice sites an invariant distance from the constant structural features of the tRNA body. Probably carries the active site for 5'-splice site cleavage. This Arabidopsis thaliana (Mouse-ear cress) protein is tRNA-splicing endonuclease subunit Sen2-1 (SEN1).